The chain runs to 144 residues: MLQPKKTKFRKAFKGRIHGLAKGGTDLNFGSYGLKALEPERVTARQIEAARRAITRHIRRQGRLWIRVFPDVPVSKKPAEVRQGKGKGSIEYWAARVKPGRILFELDGVPGPLAAEAFSRAAMKLPIKTKVVARLGDTSHLAGE.

Belongs to the universal ribosomal protein uL16 family. In terms of assembly, part of the 50S ribosomal subunit.

In terms of biological role, binds 23S rRNA and is also seen to make contacts with the A and possibly P site tRNAs. In Novosphingobium aromaticivorans (strain ATCC 700278 / DSM 12444 / CCUG 56034 / CIP 105152 / NBRC 16084 / F199), this protein is Large ribosomal subunit protein uL16.